A 764-amino-acid polypeptide reads, in one-letter code: 5-methyltetrahydropteroyltriglutamate--homocysteine methyltransferase (764 aa).

Residues 16–19 and Lys121 contribute to the 5-methyltetrahydropteroyltri-L-glutamate site; that span reads RELK. Residues 440-442 and Glu493 contribute to the L-homocysteine site; that span reads IGS. L-methionine-binding positions include 440-442 and Glu493; that span reads IGS. 5-methyltetrahydropteroyltri-L-glutamate contacts are provided by residues 524-525 and Trp570; that span reads RC. Residue Asp608 participates in L-homocysteine binding. Asp608 serves as a coordination point for L-methionine. Residue Glu614 participates in 5-methyltetrahydropteroyltri-L-glutamate binding. Zn(2+)-binding residues include His650, Cys652, and Glu674. The Proton donor role is filled by His703. Cys735 is a Zn(2+) binding site.

Belongs to the vitamin-B12 independent methionine synthase family. Zn(2+) is required as a cofactor.

It carries out the reaction 5-methyltetrahydropteroyltri-L-glutamate + L-homocysteine = tetrahydropteroyltri-L-glutamate + L-methionine. Its pathway is amino-acid biosynthesis; L-methionine biosynthesis via de novo pathway; L-methionine from L-homocysteine (MetE route): step 1/1. In terms of biological role, catalyzes the transfer of a methyl group from 5-methyltetrahydrofolate to homocysteine resulting in methionine formation. The sequence is that of 5-methyltetrahydropteroyltriglutamate--homocysteine methyltransferase from Burkholderia ambifaria (strain MC40-6).